The following is a 1172-amino-acid chain: WD repeat-containing protein 48 homolog (1172 aa).

A disordered region spans residues 1-115 (MYEYYSTGKI…HSYGGGGGGT (115 aa)). Residues 13-36 (LPQQVDSNGINSKPMNSSPSTPIP) are compositionally biased toward polar residues. A compositionally biased stretch (low complexity) spans 37–63 (NNNNNNNNNNNNNNNNNNNNNNNNNNN). Residues 64-89 (RNKSQQSFYLNNNNRNCGFSSPTKPQ) are compositionally biased toward polar residues. Positions 90–107 (YNNNNNNNNNNNSNYNHS) are enriched in low complexity. WD repeat units follow at residues 152 to 202 (RHCF…GFKF), 208 to 246 (DHTD…CVNS), 249 to 548 (FHDD…SPMF), 560 to 599 (GEGI…KIFK), 602 to 641 (GHTD…CIQV), 645 to 683 (LHTD…QSRL), and 686 to 727 (RENE…NQSI). Positions 341-365 (ISTNNNNNNSSSSNNNNNNNNNNNN) are enriched in low complexity. The tract at residues 341–544 (ISTNNNNNNS…NDNNNLNKKF (204 aa)) is disordered. Composition is skewed to polar residues over residues 366–377 (GQTNTHENTAET), 388–408 (QLSS…NFRN), and 417–434 (PPSS…SNGR). Residues 435 to 485 (NVNNRENNNNNNNNNNNNNNNNNNNNNNNNNNNNNNNNNINNNNHENNGNV) show a composition bias toward low complexity. The span at 486-503 (DVDDEDDDDDDDDDDDDD) shows a compositional bias: acidic residues. Residues 504 to 513 (CNKNKKKYDD) show a composition bias toward basic and acidic residues. Residues 514–543 (NNNNNNYNNNNNKKNNSNDNNNDNNNLNKK) are compositionally biased toward low complexity. Over residues 745 to 769 (NNNNNNNNNNNNNNNNNNNNNNNNN) the composition is skewed to low complexity. Positions 745-775 (NNNNNNNNNNNNNNNNNNNNNNNNNNREKLS) are disordered. One copy of the WD 8 repeat lies at 794–833 (QGRAGIIKNQVLNNRRQVLTKDNDNNVQLWDITKGKEIES). The interval 926–986 (ELNHSNDSVN…TNSTTPNSGR (61 aa)) is disordered. Low complexity predominate over residues 930–984 (SNDSVNSSLSSNTSGDNNNNNYNNYNNYNNNNNNGLQKSSSSSSIVSTNSTTPNS).

The protein belongs to the WD repeat WDR48 family.

In Dictyostelium discoideum (Social amoeba), this protein is WD repeat-containing protein 48 homolog.